We begin with the raw amino-acid sequence, 329 residues long: Vanillate O-demethylase oxygenase subunit (329 aa).

The 84-residue stretch at 1 to 84 (MICNERMVIY…AQERHGFIWV (84 aa)) folds into the Rieske domain. 4 residues coordinate [2Fe-2S] cluster: Cys-24, His-26, Cys-43, and His-46.

The protein belongs to the bacterial ring-hydroxylating dioxygenase alpha subunit family. This demethylase system consists of two proteins: an oxygenase and an oxygenase reductase. Requires [2Fe-2S] cluster as cofactor. Fe cation is required as a cofactor.

It carries out the reaction vanillate + NADH + O2 + H(+) = 3,4-dihydroxybenzoate + formaldehyde + NAD(+) + H2O. Its pathway is xenobiotic degradation; vanillyl-alcohol degradation. In Pseudomonas sp. (strain ATCC 19151), this protein is Vanillate O-demethylase oxygenase subunit (vanA).